The chain runs to 570 residues: Formate--tetrahydrofolate ligase (570 aa).

65–72 (TPHGEGKT) contacts ATP.

It belongs to the formate--tetrahydrofolate ligase family.

The enzyme catalyses (6S)-5,6,7,8-tetrahydrofolate + formate + ATP = (6R)-10-formyltetrahydrofolate + ADP + phosphate. It functions in the pathway one-carbon metabolism; tetrahydrofolate interconversion. This Shewanella oneidensis (strain ATCC 700550 / JCM 31522 / CIP 106686 / LMG 19005 / NCIMB 14063 / MR-1) protein is Formate--tetrahydrofolate ligase.